The primary structure comprises 341 residues: HTH-type transcriptional repressor PurR (341 aa).

An HTH lacI-type domain is found at Ala-2–Val-56. Residues Ile-4–Asn-23 constitute a DNA-binding region (H-T-H motif). Residues Ser-48–Val-56 mediate DNA binding. Residues Tyr-73, Arg-190, Thr-192, Phe-221, and Asp-275 each contribute to the hypoxanthine site.

Homodimer.

It participates in purine metabolism; purine nucleotide biosynthesis [regulation]. Functionally, is the main repressor of the genes involved in the de novo synthesis of purine nucleotides, regulating purB, purC, purEK, purF, purHD, purL, purMN and guaBA expression. PurR is allosterically activated to bind its cognate DNA by binding the purine corepressors, hypoxanthine or guanine, thereby effecting transcription repression. The sequence is that of HTH-type transcriptional repressor PurR from Klebsiella pneumoniae subsp. pneumoniae (strain ATCC 700721 / MGH 78578).